The primary structure comprises 261 residues: 5'-nucleotidase SurE (261 aa).

The a divalent metal cation site is built by D10, D11, S41, and N96.

Belongs to the SurE nucleotidase family. The cofactor is a divalent metal cation.

The protein localises to the cytoplasm. The catalysed reaction is a ribonucleoside 5'-phosphate + H2O = a ribonucleoside + phosphate. Its function is as follows. Nucleotidase that shows phosphatase activity on nucleoside 5'-monophosphates. This is 5'-nucleotidase SurE from Methanococcoides burtonii (strain DSM 6242 / NBRC 107633 / OCM 468 / ACE-M).